The following is a 129-amino-acid chain: MPRDFSRTERVGDQIQRELAELIRMELKDPRVGMVTLAGVEVSRDLAHAKVWFTVLGSEQQIADTTEGLQRAAGFLRRELGRRMRLRTVPHLHFQYDDTQEKGARLSALIDKAVAEDRAQHPDDDEDRS.

Belongs to the RbfA family. Monomer. Binds 30S ribosomal subunits, but not 50S ribosomal subunits or 70S ribosomes.

The protein localises to the cytoplasm. Functionally, one of several proteins that assist in the late maturation steps of the functional core of the 30S ribosomal subunit. Associates with free 30S ribosomal subunits (but not with 30S subunits that are part of 70S ribosomes or polysomes). Required for efficient processing of 16S rRNA. May interact with the 5'-terminal helix region of 16S rRNA. The sequence is that of Ribosome-binding factor A from Thioalkalivibrio sulfidiphilus (strain HL-EbGR7).